We begin with the raw amino-acid sequence, 248 residues long: NH(3)-dependent NAD(+) synthetase (248 aa).

31 to 38 (GLSGGVDS) provides a ligand contact to ATP. Residue Asp-37 coordinates Mg(2+). Arg-114 is a deamido-NAD(+) binding site. Thr-134 is a binding site for ATP. Position 139 (Glu-139) interacts with Mg(2+). Residues Lys-147 and Asp-154 each contribute to the deamido-NAD(+) site. Positions 163 and 185 each coordinate ATP. 232-233 (HK) lines the deamido-NAD(+) pocket.

It belongs to the NAD synthetase family. Homodimer.

It catalyses the reaction deamido-NAD(+) + NH4(+) + ATP = AMP + diphosphate + NAD(+) + H(+). The protein operates within cofactor biosynthesis; NAD(+) biosynthesis; NAD(+) from deamido-NAD(+) (ammonia route): step 1/1. Its function is as follows. Catalyzes the ATP-dependent amidation of deamido-NAD to form NAD. Uses ammonia as a nitrogen source. The protein is NH(3)-dependent NAD(+) synthetase of Mycoplasma pneumoniae (strain ATCC 29342 / M129 / Subtype 1) (Mycoplasmoides pneumoniae).